A 293-amino-acid polypeptide reads, in one-letter code: DNA repair protein RecO (293 aa).

This sequence belongs to the RecO family.

Involved in DNA repair and RecF pathway recombination. In Acaryochloris marina (strain MBIC 11017), this protein is DNA repair protein RecO.